A 490-amino-acid chain; its full sequence is Glutamyl-tRNA(Gln) amidotransferase subunit A (490 aa).

Active-site charge relay system residues include Lys-78 and Ser-153. The Acyl-ester intermediate role is filled by Ser-177.

Belongs to the amidase family. GatA subfamily. Heterotrimer of A, B and C subunits.

It carries out the reaction L-glutamyl-tRNA(Gln) + L-glutamine + ATP + H2O = L-glutaminyl-tRNA(Gln) + L-glutamate + ADP + phosphate + H(+). Allows the formation of correctly charged Gln-tRNA(Gln) through the transamidation of misacylated Glu-tRNA(Gln) in organisms which lack glutaminyl-tRNA synthetase. The reaction takes place in the presence of glutamine and ATP through an activated gamma-phospho-Glu-tRNA(Gln). In Desulforapulum autotrophicum (strain ATCC 43914 / DSM 3382 / VKM B-1955 / HRM2) (Desulfobacterium autotrophicum), this protein is Glutamyl-tRNA(Gln) amidotransferase subunit A.